The chain runs to 151 residues: Large-conductance mechanosensitive channel (151 aa).

2 helical membrane passes run Val-19–Leu-39 and Gly-85–Val-105.

Belongs to the MscL family. As to quaternary structure, homopentamer.

It is found in the cell inner membrane. Channel that opens in response to stretch forces in the membrane lipid bilayer. May participate in the regulation of osmotic pressure changes within the cell. The protein is Large-conductance mechanosensitive channel of Chlorobaculum parvum (strain DSM 263 / NCIMB 8327) (Chlorobium vibrioforme subsp. thiosulfatophilum).